A 215-amino-acid polypeptide reads, in one-letter code: uncharacterized protein (215 aa).

S-adenosyl-L-methionine is bound by residues Gly53, Glu74, and Asp97.

Belongs to the methyltransferase superfamily. YrrT family.

In terms of biological role, could be a S-adenosyl-L-methionine-dependent methyltransferase. This is an uncharacterized protein from Geobacillus thermodenitrificans (strain NG80-2).